Consider the following 108-residue polypeptide: UPF0145 protein alr2488 (108 aa).

Belongs to the UPF0145 family.

The protein is UPF0145 protein alr2488 of Nostoc sp. (strain PCC 7120 / SAG 25.82 / UTEX 2576).